The chain runs to 142 residues: 3-hydroxyacyl-[acyl-carrier-protein] dehydratase FabZ (142 aa).

The active site involves H47.

Belongs to the thioester dehydratase family. FabZ subfamily.

It is found in the cytoplasm. It carries out the reaction a (3R)-hydroxyacyl-[ACP] = a (2E)-enoyl-[ACP] + H2O. Functionally, involved in unsaturated fatty acids biosynthesis. Catalyzes the dehydration of short chain beta-hydroxyacyl-ACPs and long chain saturated and unsaturated beta-hydroxyacyl-ACPs. This is 3-hydroxyacyl-[acyl-carrier-protein] dehydratase FabZ from Thermoanaerobacter pseudethanolicus (strain ATCC 33223 / 39E) (Clostridium thermohydrosulfuricum).